The following is a 378-amino-acid chain: Probable endopolygalacturonase NFIA_008150 (378 aa).

Positions 1–19 are cleaved as a signal peptide; sequence MLKLIGSLVLLASAAEVIA. Residues 20–35 constitute a propeptide that is removed on maturation; it reads SPLAESVAPSITLEKR. C38 and C56 are oxidised to a cystine. 3 PbH1 repeats span residues 147–169, 170–200, and 201–222; these read TSSS…SING, CDGL…DIGS, and SSNI…AVNS. D215 functions as the Proton donor in the catalytic mechanism. The cysteines at positions 217 and 233 are disulfide-linked. The active site involves H237. PbH1 repeat units follow at residues 247-273 and 281-303; these read RSDN…RIKA and IKGI…LIEQ. N-linked (GlcNAc...) asparagine glycosylation occurs at N254. N327 is a glycosylation site (N-linked (GlcNAc...) asparagine). Cystine bridges form between C345–C350 and C369–C378.

It belongs to the glycosyl hydrolase 28 family.

Its subcellular location is the secreted. It catalyses the reaction (1,4-alpha-D-galacturonosyl)n+m + H2O = (1,4-alpha-D-galacturonosyl)n + (1,4-alpha-D-galacturonosyl)m.. Its function is as follows. Involved in maceration and soft-rotting of plant tissue. Hydrolyzes the 1,4-alpha glycosidic bonds of de-esterified pectate in the smooth region of the plant cell wall. The sequence is that of Probable endopolygalacturonase NFIA_008150 from Neosartorya fischeri (strain ATCC 1020 / DSM 3700 / CBS 544.65 / FGSC A1164 / JCM 1740 / NRRL 181 / WB 181) (Aspergillus fischerianus).